Reading from the N-terminus, the 302-residue chain is UDP-N-acetylenolpyruvoylglucosamine reductase (302 aa).

An FAD-binding PCMH-type domain is found at 31-210 (IGGQTKVYFR…ENEVLELKKK (180 aa)). R175 is a catalytic residue. The Proton donor role is filled by S224. E297 is a catalytic residue.

It belongs to the MurB family. Requires FAD as cofactor.

It is found in the cytoplasm. It catalyses the reaction UDP-N-acetyl-alpha-D-muramate + NADP(+) = UDP-N-acetyl-3-O-(1-carboxyvinyl)-alpha-D-glucosamine + NADPH + H(+). The protein operates within cell wall biogenesis; peptidoglycan biosynthesis. In terms of biological role, cell wall formation. This is UDP-N-acetylenolpyruvoylglucosamine reductase from Pelagibacter ubique (strain HTCC1062).